A 735-amino-acid chain; its full sequence is Translation initiation factor IF-2, chloroplastic (735 aa).

Residues 239-411 (RRAPIVTILG…ILLMADIENY (173 aa)) enclose the tr-type G domain. A G1 region spans residues 248-255 (GHVDHGKT). 248-255 (GHVDHGKT) is a GTP binding site. The interval 273–277 (GITQK) is G2. The tract at residues 298–301 (DTPG) is G3. Residues 298–302 (DTPGH) and 352–355 (NKID) each bind GTP. Positions 352–355 (NKID) are G4. Residues 388–390 (SAS) are G5.

This sequence belongs to the TRAFAC class translation factor GTPase superfamily. Classic translation factor GTPase family. IF-2 subfamily.

It localises to the plastid. Its subcellular location is the chloroplast. Functionally, one of the essential components for the initiation of protein synthesis. Protects formylmethionyl-tRNA from spontaneous hydrolysis and promotes its binding to the 30S ribosomal subunits. Also involved in the hydrolysis of GTP during the formation of the 70S ribosomal complex. The sequence is that of Translation initiation factor IF-2, chloroplastic (infB) from Guillardia theta (Cryptophyte).